Here is a 513-residue protein sequence, read N- to C-terminus: MQLNPSEISELIKSKIEGLSVTSEFRTQGTIVSLTDGIVRVHGLSDVMQGEMLEFPGGTYGLALNLERDSVGAVILGAYEHLTEGDIVKCTGRVLEVPVGEALLGRVVNALGQPIDGKGPVAAQGMEPIEKIAPGVISRKSVDQPMQTGLKSVDSMVPIGRGQRELIIGDRQTGKTAVAIDAIINQKGEDMICIYVAIGQKASSIANVVRKLEEVGAMAYTIVVVASASESAAMQYIAPYSGCTMGEYFRDKGQDALIVYDDLTKQAWAYRQISLLLRRPPGREAYPGDVFYLHSRLLERAARVNADYVEKATGGKVKGKTGSLTALPIIETQAGDVTAFVPTNVISITDGQIFLESDLFNAGIRPAINAGVSVSRVGGAAQTKVIKKLGGGIRLALAQYRELAAFAQFASDLDEATRKQLERGKMATELMKQAQYATLKVSEMALTLFALNKGYFDDVDIKRALAFESALKSHVRSHHAAILDKIETTKELDAETEKALEAAIQEFKQNGIY.

Residue 169-176 (GDRQTGKT) coordinates ATP.

The protein belongs to the ATPase alpha/beta chains family. F-type ATPases have 2 components, CF(1) - the catalytic core - and CF(0) - the membrane proton channel. CF(1) has five subunits: alpha(3), beta(3), gamma(1), delta(1), epsilon(1). CF(0) has three main subunits: a(1), b(2) and c(9-12). The alpha and beta chains form an alternating ring which encloses part of the gamma chain. CF(1) is attached to CF(0) by a central stalk formed by the gamma and epsilon chains, while a peripheral stalk is formed by the delta and b chains.

It localises to the cell inner membrane. It carries out the reaction ATP + H2O + 4 H(+)(in) = ADP + phosphate + 5 H(+)(out). Produces ATP from ADP in the presence of a proton gradient across the membrane. The alpha chain is a regulatory subunit. This chain is ATP synthase subunit alpha 1, found in Nitrosomonas eutropha (strain DSM 101675 / C91 / Nm57).